The primary structure comprises 554 residues: Hydroxylamine reductase (554 aa).

Positions 3, 6, 18, and 25 each coordinate [2Fe-2S] cluster. Residues His252, Glu276, Cys320, Cys408, Cys436, Cys461, Glu495, and Lys497 each contribute to the hybrid [4Fe-2O-2S] cluster site. Cys408 is modified (cysteine persulfide).

It belongs to the HCP family. The cofactor is [2Fe-2S] cluster. Hybrid [4Fe-2O-2S] cluster serves as cofactor.

The protein resides in the cytoplasm. The enzyme catalyses A + NH4(+) + H2O = hydroxylamine + AH2 + H(+). Catalyzes the reduction of hydroxylamine to form NH(3) and H(2)O. This chain is Hydroxylamine reductase, found in Shewanella baltica (strain OS195).